A 446-amino-acid polypeptide reads, in one-letter code: Histidine--tRNA ligase (446 aa).

The protein belongs to the class-II aminoacyl-tRNA synthetase family. As to quaternary structure, homodimer.

Its subcellular location is the cytoplasm. It catalyses the reaction tRNA(His) + L-histidine + ATP = L-histidyl-tRNA(His) + AMP + diphosphate + H(+). The chain is Histidine--tRNA ligase from Burkholderia cenocepacia (strain ATCC BAA-245 / DSM 16553 / LMG 16656 / NCTC 13227 / J2315 / CF5610) (Burkholderia cepacia (strain J2315)).